The following is a 226-amino-acid chain: PtdIns3K complex I subunit atg38 (226 aa).

Ser-2 carries the N-acetylserine modification. Coiled-coil stretches lie at residues 52-85 (DVTQ…ENNI) and 182-209 (FKEY…LRER).

It belongs to the ATG38 family. Homodimer. Component of the autophagy-specific VPS34 PI3-kinase complex I composed of VPS15, VPS30, VPS34, ATG14 and an ATG38 homodimer. Interacts directly with ATG14 and VPS34.

The protein resides in the cytoplasm. The protein localises to the preautophagosomal structure membrane. In terms of biological role, autophagy-related protein required for cytoplasm to vacuole transport (Cvt) and autophagy as a part of the autophagy-specific VPS34 PI3-kinase complex I. This complex is essential to recruit the ATG8-phosphatidylinositol conjugate and the ATG12-ATG5 conjugate to the pre-autophagosomal structure. ATG38 is required for the integrity of the active PI3-kinase complex I by maintaining an association between VPS15-VPS34 and ATG14-VPS30 subcomplexes. The polypeptide is PtdIns3K complex I subunit atg38 (Saccharomyces cerevisiae (strain ATCC 204508 / S288c) (Baker's yeast)).